Consider the following 155-residue polypeptide: dCTP deaminase (155 aa).

Residues 79 to 84 (RSSLAR), Asp95, Gln124, and Tyr138 contribute to the dCTP site.

The protein belongs to the dCTP deaminase family. In terms of assembly, homotrimer.

It catalyses the reaction dCTP + H2O + H(+) = dUTP + NH4(+). It functions in the pathway pyrimidine metabolism; dUMP biosynthesis; dUMP from dCTP (dUTP route): step 1/2. Catalyzes the deamination of dCTP to dUTP. The protein is dCTP deaminase of Thermococcus kodakarensis (strain ATCC BAA-918 / JCM 12380 / KOD1) (Pyrococcus kodakaraensis (strain KOD1)).